The primary structure comprises 234 residues: NAD-reducing hydrogenase HoxS subunit gamma (234 aa).

Residues 2–77 (SIQITIDGKT…GLNVEVNDPE (76 aa)) form the 2Fe-2S ferredoxin-type domain. Residues Cys35, Cys46, Cys49, and Cys61 each contribute to the [2Fe-2S] cluster site. The 4Fe-4S His(Cys)3-ligated-type domain maps to 77–116 (ELVDMRKALVEFLFAEGNHNCPSCEKSGRCQLQAVGYEVD). [4Fe-4S] cluster is bound by residues His95, Cys97, Cys100, Cys106, Cys145, Cys148, Cys151, and Cys198.

It belongs to the complex I 75 kDa subunit family. In terms of assembly, tetramer of an alpha and a gamma subunits (flavin-containing dimer), and a delta and a nickel-containing beta subunits (hydrogenase dimer). It depends on [2Fe-2S] cluster as a cofactor. The cofactor is [4Fe-4S] cluster.

It localises to the cytoplasm. The catalysed reaction is H2 + NAD(+) = NADH + H(+). Its function is as follows. Subunits alpha and gamma of HoxS constitute an NADH--oxidoreductase. In Cupriavidus necator (strain ATCC 17699 / DSM 428 / KCTC 22496 / NCIMB 10442 / H16 / Stanier 337) (Ralstonia eutropha), this protein is NAD-reducing hydrogenase HoxS subunit gamma (hoxU).